We begin with the raw amino-acid sequence, 709 residues long: Fatty acid oxidation complex subunit alpha (709 aa).

Residues 1–188 (MEKTFNLTRR…KMGLVNDVVP (188 aa)) form an enoyl-CoA hydratase region. Positions 308-709 (RKVKKAVILG…AMAAEKARFF (402 aa)) are 3-hydroxyacyl-CoA dehydrogenase.

It in the N-terminal section; belongs to the enoyl-CoA hydratase/isomerase family. This sequence in the central section; belongs to the 3-hydroxyacyl-CoA dehydrogenase family. Heterotetramer of two alpha chains (FadJ) and two beta chains (FadI).

The protein localises to the cytoplasm. The enzyme catalyses a (3S)-3-hydroxyacyl-CoA = a (2E)-enoyl-CoA + H2O. The catalysed reaction is a 4-saturated-(3S)-3-hydroxyacyl-CoA = a (3E)-enoyl-CoA + H2O. It carries out the reaction a (3S)-3-hydroxyacyl-CoA + NAD(+) = a 3-oxoacyl-CoA + NADH + H(+). It catalyses the reaction (3S)-3-hydroxybutanoyl-CoA = (3R)-3-hydroxybutanoyl-CoA. Its pathway is lipid metabolism; fatty acid beta-oxidation. In terms of biological role, catalyzes the formation of a hydroxyacyl-CoA by addition of water on enoyl-CoA. Also exhibits 3-hydroxyacyl-CoA epimerase and 3-hydroxyacyl-CoA dehydrogenase activities. The sequence is that of Fatty acid oxidation complex subunit alpha from Shewanella sp. (strain ANA-3).